The chain runs to 342 residues: Mitogen-activated protein kinase kinase kinase 20 (342 aa).

Residues 3 to 268 enclose the Protein kinase domain; it reads WVRGETIGFG…AEMLLNHSFV (266 aa). 9 to 17 contacts ATP; that stretch reads IGFGTFSTV. Residue Ser-18 is modified to Phosphoserine. Thr-19 carries the phosphothreonine modification. Residue Lys-36 participates in ATP binding. Phosphotyrosine occurs at positions 41 and 66. 2 positions are modified to phosphoserine: Ser-93 and Ser-114. The active-site Proton acceptor is the Asp-131. The tract at residues 285-342 is required for MKK3 binding; the sequence is KDEDKVLMSPKCPFEFDDWDSFTLDSNPSFDSPVERLGSLVSGSIPDWSVGGSWLTVR.

The protein belongs to the protein kinase superfamily. Ser/Thr protein kinase family. As to quaternary structure, interacts with MKK3 and MPK18 via its C-terminal domain. Binds to MKK5. Autophosphorylates; active in phosphorylated state. Dephosphorylated by ABI1. In terms of tissue distribution, expressed in roots, seedlings, leaves, flower buds, flowers and siliques.

It localises to the nucleus. It is found in the cytoplasm. The enzyme catalyses L-seryl-[protein] + ATP = O-phospho-L-seryl-[protein] + ADP + H(+). It carries out the reaction L-threonyl-[protein] + ATP = O-phospho-L-threonyl-[protein] + ADP + H(+). Its activity is regulated as follows. Activated through serine, threonine and tyrosine phosphorylation, especially upon abscisic acid (ABA) treatment. Restricted activity by ABI1-mediated dephosphorylation. Its function is as follows. Mitogen-activated protein kinase kinase (MAPKK) that phosphorylates both MKK3 and MPK18 and regulate two separate signaling pathways involved in root microtubule functions. MAPKK which regulates abscisic acid (ABA) responses in a MAPKKK20-MKK5-MPK6 cascade involved in root growth (e.g. root cell division and elongation) and stomatal response, probably via MKK5 activation by protein phosphorylation and subsequent activation of MAPK6 by MKK5. Involved in various abiotic stresses (e.g. osmotic stress, cold and hydrogen peroxide) responses by phosphorylating and thus regulating MPK6 activity, in an ABA-independent manner. In Arabidopsis thaliana (Mouse-ear cress), this protein is Mitogen-activated protein kinase kinase kinase 20.